The sequence spans 697 residues: tRNA 5-methylaminomethyl-2-thiouridine biosynthesis bifunctional protein MnmC (697 aa).

The tRNA (mnm(5)s(2)U34)-methyltransferase stretch occupies residues 1–269; the sequence is MNKTPLLSVS…LRQQLQQQFA (269 aa). The segment at 287-697 is FAD-dependent cmnm(5)s(2)U34 oxidoreductase; that stretch reads IGGGIASASL…RKLLKGKALM (411 aa).

The protein in the N-terminal section; belongs to the methyltransferase superfamily. tRNA (mnm(5)s(2)U34)-methyltransferase family. In the C-terminal section; belongs to the DAO family. Requires FAD as cofactor.

It is found in the cytoplasm. The catalysed reaction is 5-aminomethyl-2-thiouridine(34) in tRNA + S-adenosyl-L-methionine = 5-methylaminomethyl-2-thiouridine(34) in tRNA + S-adenosyl-L-homocysteine + H(+). Its function is as follows. Catalyzes the last two steps in the biosynthesis of 5-methylaminomethyl-2-thiouridine (mnm(5)s(2)U) at the wobble position (U34) in tRNA. Catalyzes the FAD-dependent demodification of cmnm(5)s(2)U34 to nm(5)s(2)U34, followed by the transfer of a methyl group from S-adenosyl-L-methionine to nm(5)s(2)U34, to form mnm(5)s(2)U34. The polypeptide is tRNA 5-methylaminomethyl-2-thiouridine biosynthesis bifunctional protein MnmC (Shewanella frigidimarina (strain NCIMB 400)).